A 137-amino-acid polypeptide reads, in one-letter code: Large-conductance mechanosensitive channel (137 aa).

2 consecutive transmembrane segments (helical) span residues 10-30 (FAMR…AAFG) and 76-96 (GVFI…FMAI).

The protein belongs to the MscL family. As to quaternary structure, homopentamer.

It is found in the cell inner membrane. Functionally, channel that opens in response to stretch forces in the membrane lipid bilayer. May participate in the regulation of osmotic pressure changes within the cell. This is Large-conductance mechanosensitive channel from Escherichia coli O45:K1 (strain S88 / ExPEC).